Consider the following 345-residue polypeptide: Tropomodulin-4 (345 aa).

The tract at residues 42-63 (NMLLPAGLRQRDQTKKSPTGPL) is disordered.

The protein belongs to the tropomodulin family. Binds to the N-terminus of tropomyosin and to actin. As to expression, highly expressed in skeletal muscle.

It is found in the cytoplasm. Its subcellular location is the cytoskeleton. Blocks the elongation and depolymerization of the actin filaments at the pointed end. The Tmod/TM complex contributes to the formation of the short actin protofilament, which in turn defines the geometry of the membrane skeleton. The polypeptide is Tropomodulin-4 (TMOD4) (Homo sapiens (Human)).